Here is a 1047-residue protein sequence, read N- to C-terminus: FACT complex subunit SPT16 (1047 aa).

At A2 the chain carries N-acetylalanine. K139 carries the post-translational modification N6-acetyllysine. The residue at position 188 (S188) is a Phosphoserine. 2 positions are modified to N6-acetyllysine: K196 and K223. Residues 432 to 507 (LKNEDEEEEE…GEQQIQKARK (76 aa)) adopt a coiled-coil conformation. S455 carries the post-translational modification Phosphoserine. Residues 492 to 518 (RLTEQKGEQQIQKARKSNVSYKNPSLM) form a disordered region. K497 is covalently cross-linked (Glycyl lysine isopeptide (Lys-Gly) (interchain with G-Cter in SUMO2)). Polar residues predominate over residues 499 to 514 (EQQIQKARKSNVSYKN). S508 carries the post-translational modification Phosphoserine. At K513 the chain carries N6-acetyllysine; alternate. A Glycyl lysine isopeptide (Lys-Gly) (interchain with G-Cter in SUMO2); alternate cross-link involves residue K513. K647 participates in a covalent cross-link: Glycyl lysine isopeptide (Lys-Gly) (interchain with G-Cter in SUMO2). A phosphoserine mark is found at S650 and S658. N6-acetyllysine occurs at positions 732 and 786. Phosphothreonine is present on T903. K904 carries the N6-acetyllysine modification. Positions 918-1047 (EQGGWSFLEP…SSAPPKKKRK (130 aa)) are disordered. The segment covering 927-973 (PEGEGSDAEEGDSESEIEDETFNPSEDDYEEEEEDSDEDYSSEAEES) has biased composition (acidic residues). Phosphoserine occurs at positions 979, 982, 986, and 1015. Residues 985–1005 (ESGKDWDELEEEARKADRESR) show a composition bias toward basic and acidic residues. Residues 1024-1039 (VHSSGRGSNRGSRHSS) are compositionally biased toward low complexity.

The protein belongs to the peptidase M24 family. SPT16 subfamily. In terms of assembly, interacts with MYOG (via C-terminal region). Component of the FACT complex, a stable heterodimer of SSRP1 and SUPT16H. Also a component of a CK2-SPT16-SSRP1 complex which forms following UV irradiation, composed of SSRP1, SUPT16H, CSNK2A1, CSNK2A2 and CSNK2B. Interacts with NEK9. Binds to histone H2A-H2B. Identified in a centromere complex containing histones H2A, H2B and H4, and at least CENPA, CENPB, CENPC, CENPT, CENPN, HJURP, SUPT16H, SSRP1 and RSF1. Interacts with GTF2E2. As to quaternary structure, (Microbial infection) Interacts with Herpes simplex virus 1 (HHV-1) protein ICP22; this interaction relocalizes the FACT complex to viral genomes in infected cells. In terms of processing, ADP-ribosylated. ADP-ribosylation by PARP1 is induced by genotoxic stress and correlates with dissociation of FACT from chromatin. In terms of tissue distribution, ubiquitous.

The protein localises to the nucleus. The protein resides in the chromosome. Its function is as follows. Component of the FACT complex, a general chromatin factor that acts to reorganize nucleosomes. The FACT complex is involved in multiple processes that require DNA as a template such as mRNA elongation, DNA replication and DNA repair. During transcription elongation the FACT complex acts as a histone chaperone that both destabilizes and restores nucleosomal structure. It facilitates the passage of RNA polymerase II and transcription by promoting the dissociation of one histone H2A-H2B dimer from the nucleosome, then subsequently promotes the reestablishment of the nucleosome following the passage of RNA polymerase II. The FACT complex is probably also involved in phosphorylation of 'Ser-392' of p53/TP53 via its association with CK2 (casein kinase II). The protein is FACT complex subunit SPT16 (SUPT16H) of Homo sapiens (Human).